The primary structure comprises 148 residues: uncharacterized protein (148 aa).

A helical membrane pass occupies residues 7–29; that stretch reads MLILMSLVKIVLTCLPTGVIEWL.

It localises to the membrane. This is an uncharacterized protein from Bacillus subtilis (strain 168).